The primary structure comprises 337 residues: Ketol-acid reductoisomerase (NADP(+)) (337 aa).

One can recognise a KARI N-terminal Rossmann domain in the interval 3–183 (IELFYDADAD…GGGRAGIIPT (181 aa)). NADP(+)-binding positions include 26–29 (YGSQ), Arg49, Ser52, Ser54, and 84–87 (DTSQ). The active site involves His109. Position 135 (Gly135) interacts with NADP(+). Residues 184–329 (TFEAETVTDL…AKLRDLMSWV (146 aa)) enclose the KARI C-terminal knotted domain. Positions 192, 196, 228, and 232 each coordinate Mg(2+). Ser253 lines the substrate pocket.

The protein belongs to the ketol-acid reductoisomerase family. Mg(2+) is required as a cofactor.

The catalysed reaction is (2R)-2,3-dihydroxy-3-methylbutanoate + NADP(+) = (2S)-2-acetolactate + NADPH + H(+). The enzyme catalyses (2R,3R)-2,3-dihydroxy-3-methylpentanoate + NADP(+) = (S)-2-ethyl-2-hydroxy-3-oxobutanoate + NADPH + H(+). It functions in the pathway amino-acid biosynthesis; L-isoleucine biosynthesis; L-isoleucine from 2-oxobutanoate: step 2/4. The protein operates within amino-acid biosynthesis; L-valine biosynthesis; L-valine from pyruvate: step 2/4. Functionally, involved in the biosynthesis of branched-chain amino acids (BCAA). Catalyzes an alkyl-migration followed by a ketol-acid reduction of (S)-2-acetolactate (S2AL) to yield (R)-2,3-dihydroxy-isovalerate. In the isomerase reaction, S2AL is rearranged via a Mg-dependent methyl migration to produce 3-hydroxy-3-methyl-2-ketobutyrate (HMKB). In the reductase reaction, this 2-ketoacid undergoes a metal-dependent reduction by NADPH to yield (R)-2,3-dihydroxy-isovalerate. In Corynebacterium efficiens (strain DSM 44549 / YS-314 / AJ 12310 / JCM 11189 / NBRC 100395), this protein is Ketol-acid reductoisomerase (NADP(+)).